The following is a 332-amino-acid chain: Melanocortin receptor 4 (332 aa).

Over methionine 1–glutamine 43 the chain is Extracellular. N-linked (GlcNAc...) asparagine glycans are attached at residues asparagine 2, asparagine 17, and asparagine 26. Disulfide bonds link cysteine 40/cysteine 279 and cysteine 271/cysteine 277. Residues leucine 44 to isoleucine 69 traverse the membrane as a helical segment. Topologically, residues alanine 70–phenylalanine 81 are cytoplasmic. The helical transmembrane segment at phenylalanine 82–leucine 106 threads the bilayer. Residues glutamate 100, aspartate 122, and aspartate 126 each contribute to the Ca(2+) site. The Extracellular segment spans residues leucine 107 to asparagine 123. Residues valine 124 to valine 145 traverse the membrane as a helical segment. The Cytoplasmic portion of the chain corresponds to aspartate 146–arginine 165. A helical transmembrane segment spans residues valine 166–isoleucine 186. The Extracellular segment spans residues tyrosine 187–serine 191. A helical transmembrane segment spans residues alanine 192–methionine 215. The Cytoplasmic portion of the chain corresponds to phenylalanine 216 to threonine 248. A helical transmembrane segment spans residues isoleucine 249–cysteine 271. The Extracellular portion of the chain corresponds to proline 272–phenylalanine 280. The chain crosses the membrane as a helical span at residues methionine 281–leucine 304. Residues arginine 305–tyrosine 332 lie on the Cytoplasmic side of the membrane. Cysteine 318 is lipidated: S-palmitoyl cysteine.

Belongs to the G-protein coupled receptor 1 family. Homodimer; disulfide-linked, also forms higher order oligomers. Interacts with GNAS. Interacts with ATRNL1. Interacts with MGRN1; this interaction competes with GNAS-binding and thus inhibits agonist-induced cAMP production. Interacts with MRAP and MRAP2; these associated factors increase ligand-sensitivity and generation of cAMP. Brain, enriched in the striatum, nucleus accumbens, and periaqueductal gray.

The protein localises to the cell membrane. Hormone receptor that acts as a key component of the leptin-melanocortin pathway at the intersection of homeostatic maintenance of energetic state. Plays a role in regulating food intake: activation by a stimulating hormone such as anorexigenic alpha-melanocyte stimulating hormone (alpha-MSH) inhibits appetite, whereas binding to a natural antagonist like Agouti-related protein/AGRP promotes appetite. G-protein-coupled receptor that activates conventional Galphas signaling leading to induction of anorexogenic signaling in the hypothalamus to result in negative energy balance. Regulates the firing activity of neurons from the hypothalamus by alpha-MSH and AGRP independently of Galphas signaling by ligand-induced coupling of closure of inwardly rectifying potassium channel KCNJ13. In intestinal epithelial cells, plays a role in the inhibition of hepatic glucose production via nesfatin-1/NUCB2 leading to increased cyclic adenosine monophosphate (cAMP) levels and glucagon-like peptide 1 (GLP-1) secretion in the intestinal epithelium. This chain is Melanocortin receptor 4 (Mc4r), found in Rattus norvegicus (Rat).